Reading from the N-terminus, the 206-residue chain is Large ribosomal subunit protein eL13x (206 aa).

The disordered stretch occupies residues 186-206 (NARHAGARAKRAAEAEKEEKK). Residues 196-206 (RAAEAEKEEKK) are compositionally biased toward basic and acidic residues.

The protein belongs to the eukaryotic ribosomal protein eL13 family.

This is Large ribosomal subunit protein eL13x (RPL13D) from Arabidopsis thaliana (Mouse-ear cress).